Reading from the N-terminus, the 136-residue chain is Large ribosomal subunit protein uL16 (136 aa).

It belongs to the universal ribosomal protein uL16 family. As to quaternary structure, part of the 50S ribosomal subunit.

Functionally, binds 23S rRNA and is also seen to make contacts with the A and possibly P site tRNAs. In Hamiltonella defensa subsp. Acyrthosiphon pisum (strain 5AT), this protein is Large ribosomal subunit protein uL16.